The chain runs to 470 residues: Synaptotagmin-17 (470 aa).

The segment at 54-112 is disordered; the sequence is PPWLMASRSNDKDGDSVHTASDVPLTPRTNSPDGRRSSSDTSKSTYSLTRRISSLDSRR. Positions 92 to 112 are enriched in low complexity; that stretch reads SDTSKSTYSLTRRISSLDSRR. Phosphoserine is present on residues Ser114 and Ser115. C2 domains are found at residues 180-306 and 317-451; these read QLGM…HWWK and ELGE…EQWH.

This sequence belongs to the synaptotagmin family.

Its subcellular location is the membrane. Plays a role in dendrite formation by melanocytes. This is Synaptotagmin-17 (Syt17) from Mus musculus (Mouse).